The sequence spans 332 residues: Ornithine carbamoyltransferase, catabolic (332 aa).

Residues 60–63 (STRT), Q87, R111, and 138–141 (HPTQ) each bind carbamoyl phosphate. L-ornithine-binding positions include N170, D230, and 234-235 (SM). Carbamoyl phosphate-binding positions include 271–272 (CL) and R316.

This sequence belongs to the aspartate/ornithine carbamoyltransferase superfamily. OTCase family.

It is found in the cytoplasm. The catalysed reaction is carbamoyl phosphate + L-ornithine = L-citrulline + phosphate + H(+). It functions in the pathway amino-acid degradation; L-arginine degradation via ADI pathway; carbamoyl phosphate from L-arginine: step 2/2. Its function is as follows. Reversibly catalyzes the transfer of the carbamoyl group from carbamoyl phosphate (CP) to the N(epsilon) atom of ornithine (ORN) to produce L-citrulline. In Bacillus cereus (strain ATCC 10987 / NRS 248), this protein is Ornithine carbamoyltransferase, catabolic.